Here is a 1147-residue protein sequence, read N- to C-terminus: ATP-dependent helicase/deoxyribonuclease subunit B (1147 aa).

8 to 15 contacts ATP; that stretch reads GGSGAGKS. 4 residues coordinate [4Fe-4S] cluster: C780, C1092, C1095, and C1101.

It belongs to the helicase family. AddB/RexB type 1 subfamily. As to quaternary structure, heterodimer of AddA and AddB. The cofactor is Mg(2+). It depends on [4Fe-4S] cluster as a cofactor.

The heterodimer acts as both an ATP-dependent DNA helicase and an ATP-dependent, dual-direction single-stranded exonuclease. Recognizes the chi site generating a DNA molecule suitable for the initiation of homologous recombination. The AddB subunit has 5' -&gt; 3' nuclease activity but not helicase activity. This is ATP-dependent helicase/deoxyribonuclease subunit B from Lachnoclostridium phytofermentans (strain ATCC 700394 / DSM 18823 / ISDg) (Clostridium phytofermentans).